We begin with the raw amino-acid sequence, 229 residues long: 3,4-dihydroxy-2-butanone 4-phosphate synthase (229 aa).

D-ribulose 5-phosphate-binding positions include 28-29, Asp-33, 164-168, and Glu-188; these read RE and RGGHT. Residue Glu-29 coordinates Mg(2+). Position 167 (His-167) interacts with Mg(2+).

The protein belongs to the DHBP synthase family. Homodimer. Mg(2+) serves as cofactor. It depends on Mn(2+) as a cofactor.

It carries out the reaction D-ribulose 5-phosphate = (2S)-2-hydroxy-3-oxobutyl phosphate + formate + H(+). It functions in the pathway cofactor biosynthesis; riboflavin biosynthesis; 2-hydroxy-3-oxobutyl phosphate from D-ribulose 5-phosphate: step 1/1. Functionally, catalyzes the conversion of D-ribulose 5-phosphate to formate and 3,4-dihydroxy-2-butanone 4-phosphate. The protein is 3,4-dihydroxy-2-butanone 4-phosphate synthase of Methanothermobacter thermautotrophicus (strain ATCC 29096 / DSM 1053 / JCM 10044 / NBRC 100330 / Delta H) (Methanobacterium thermoautotrophicum).